A 580-amino-acid polypeptide reads, in one-letter code: XK-related protein 7 (580 aa).

Residues 1-22 show a composition bias toward low complexity; that stretch reads MAAKSDGAAAVAGPGPEGPAGA. A disordered region spans residues 1–28; sequence MAAKSDGAAAVAGPGPEGPAGADRGGAG. 8 helical membrane passes run 59-79, 89-109, 260-280, 303-323, 326-346, 355-375, 384-404, and 415-435; these read WVLCALLVFFSDGATDLWLAA, YFGLTLLFVLLPSLVVQLLSF, LLTALSISASLVSLAWTLASY, VLWHLFTIAARTLAFALFASV, LYFGIFIVAHWCIMTFWVIQG, WEEIIYNMVVGIIYIFCWFNV, VTLYYCIVLLENAALTGFWYS, and LILVCVVASSFALGIFFMCVY. A disordered region spans residues 470–516; it reads TSPPRSLPRTTGAERDGAAVGGERAGTPTPPVFQVRPGLPPTPVARP.

The protein belongs to the XK family.

It is found in the cell membrane. The sequence is that of XK-related protein 7 from Rattus norvegicus (Rat).